The following is a 397-amino-acid chain: Elongation factor Tu (397 aa).

Positions 10-206 (KPHVNIGTIG…AVDASIPEPE (197 aa)) constitute a tr-type G domain. The segment at 19 to 26 (GHIDHGKT) is G1. A GTP-binding site is contributed by 19–26 (GHIDHGKT). Mg(2+) is bound at residue Thr26. The tract at residues 62–66 (GITIS) is G2. The G3 stretch occupies residues 83 to 86 (DCPG). GTP contacts are provided by residues 83 to 87 (DCPGH) and 138 to 141 (NKAD). The interval 138–141 (NKAD) is G4. Residues 176–178 (SAL) are G5.

It belongs to the TRAFAC class translation factor GTPase superfamily. Classic translation factor GTPase family. EF-Tu/EF-1A subfamily. Monomer.

The protein localises to the cytoplasm. It carries out the reaction GTP + H2O = GDP + phosphate + H(+). Functionally, GTP hydrolase that promotes the GTP-dependent binding of aminoacyl-tRNA to the A-site of ribosomes during protein biosynthesis. This is Elongation factor Tu from Parafrankia sp. (strain EAN1pec).